Reading from the N-terminus, the 116-residue chain is uncharacterized protein (116 aa).

A helical transmembrane segment spans residues 89–109 (VGFVILILLYILTNPNAIELI).

Belongs to the M.jannaschii MJ0023/MJ0349/MJ1072/MJ1074/MJ1107/MJECL16 family.

The protein localises to the membrane. This is an uncharacterized protein from Methanocaldococcus jannaschii (strain ATCC 43067 / DSM 2661 / JAL-1 / JCM 10045 / NBRC 100440) (Methanococcus jannaschii).